Reading from the N-terminus, the 410-residue chain is Phosphoglycerate kinase (410 aa).

Substrate-binding positions include 19–21 (DLN), arginine 34, 57–60 (HQGK), arginine 114, and arginine 154. ATP-binding positions include glutamate 332 and 358-361 (GGHS).

Belongs to the phosphoglycerate kinase family. Homodimer.

The protein localises to the cytoplasm. It carries out the reaction (2R)-3-phosphoglycerate + ATP = (2R)-3-phospho-glyceroyl phosphate + ADP. It functions in the pathway carbohydrate degradation; glycolysis; pyruvate from D-glyceraldehyde 3-phosphate: step 2/5. The sequence is that of Phosphoglycerate kinase (pgk) from Pyrococcus furiosus (strain ATCC 43587 / DSM 3638 / JCM 8422 / Vc1).